A 440-amino-acid chain; its full sequence is MESQQLSNYSPISHGSACASVTSKEVHTNQDPLDVSASKTEECEKASTKANSQQTTTPASSAVPENPHHASPQPASVPPPQNGPYPQQCMMTQNQANPSGWSFYGHPSMIPYTPYQMSPMYFPPGPQSQFPQYPSSVGTPLSTPSPESGNTFTDSSSADSDMTSTKKYVRPPPMLTSPNDFPNWVKTYIKFLQNSNLGGIIPTVNGKPVRQITDDELTFLYNTFQIFAPSQFLPTWVKDILSVDYTDIMKILSKSIEKMQSDTQEANDIVTLANLQYNGSTPADAFETKVTNIIDRLNNNGIHINNKVACQLIMRGLSGEYKFLRYTRHRHLNMTVAELFLDIHAIYEEQQGSRNSKPNYRRNLSDEKNDSRSYTNTTKPKVIARNPQKTNNSKSKTARAHNVSTSNNSPSTDNDSISKSTTEPIQLNNKHDLHLRPGTY.

3 stretches are compositionally biased toward polar residues: residues Met1 to Ser23, Thr48 to Ser60, and Gln127 to Phe152. Disordered stretches follow at residues Met1–Gln93, Pro126–Pro173, and Gly352–Tyr440. Over residues Thr153–Thr165 the composition is skewed to low complexity. Residues Asn299–His401 form an RNA-binding region. Residues Asn402–Ser418 show a composition bias toward low complexity. Ser416 carries the phosphoserine modification. The segment covering Lys419 to Asn428 has biased composition (polar residues). Positions Asn429–Tyr440 are enriched in basic and acidic residues.

As to quaternary structure, homotrimer.

The protein resides in the cytoplasm. In terms of biological role, capsid protein (CA) is the structural component of the virus-like particle (VLP), forming the shell that encapsulates the retrotransposons dimeric RNA genome. The particles are assembled from trimer-clustered units and there are holes in the capsid shells that allow for the diffusion of macromolecules. CA also has nucleocapsid-like chaperone activity, promoting primer tRNA(i)-Met annealing to the multipartite primer-binding site (PBS), dimerization of Ty1 RNA and initiation of reverse transcription. The polypeptide is Transposon Ty1-PR3 Gag polyprotein (TY1A-PR3) (Saccharomyces cerevisiae (strain ATCC 204508 / S288c) (Baker's yeast)).